Here is a 188-residue protein sequence, read N- to C-terminus: Ion-translocating oxidoreductase complex subunit B (188 aa).

The hydrophobic stretch occupies residues 1–26; that stretch reads MNGVFLAIGALLPICLAGGALLGYAA. Residues 32–90 enclose the 4Fe-4S domain; it reads QGDPVAEQVNALLPQTQCGQCGYPGCKPYAEAIAAGDKINKCPPGGEATIRALADLLDL. Cysteine 49, cysteine 52, cysteine 57, cysteine 73, cysteine 113, cysteine 116, cysteine 119, cysteine 123, cysteine 143, cysteine 146, cysteine 149, and cysteine 153 together coordinate [4Fe-4S] cluster. 2 consecutive 4Fe-4S ferredoxin-type domains span residues 104–133 and 134–163; these read RVAYIREAECIGCTKCIQACPVDAIVGAAR and LMHTVIADECTGCDLCLEPCPVDCIEMRET.

This sequence belongs to the 4Fe4S bacterial-type ferredoxin family. RnfB subfamily. As to quaternary structure, the complex is composed of six subunits: RnfA, RnfB, RnfC, RnfD, RnfE and RnfG. The cofactor is [4Fe-4S] cluster.

Its subcellular location is the cell inner membrane. Part of a membrane-bound complex that couples electron transfer with translocation of ions across the membrane. This chain is Ion-translocating oxidoreductase complex subunit B, found in Pseudomonas aeruginosa (strain UCBPP-PA14).